Reading from the N-terminus, the 155-residue chain is Putative pre-16S rRNA nuclease (155 aa).

The protein belongs to the YqgF nuclease family.

Its subcellular location is the cytoplasm. In terms of biological role, could be a nuclease involved in processing of the 5'-end of pre-16S rRNA. This chain is Putative pre-16S rRNA nuclease, found in Xanthomonas oryzae pv. oryzae (strain MAFF 311018).